A 120-amino-acid polypeptide reads, in one-letter code: NADH-quinone oxidoreductase subunit A (120 aa).

Transmembrane regions (helical) follow at residues 6 to 26 (YGIIAVFLVGGAATAVAALAT), 63 to 83 (FLYALVFLLFDVETVFLYPWA), and 89 to 109 (LGLFAFAEMIVFIGILVLGLW).

The protein belongs to the complex I subunit 3 family. As to quaternary structure, NDH-1 is composed of 14 different subunits. Subunits NuoA, H, J, K, L, M, N constitute the membrane sector of the complex.

The protein resides in the cell membrane. The enzyme catalyses a quinone + NADH + 5 H(+)(in) = a quinol + NAD(+) + 4 H(+)(out). Its function is as follows. NDH-1 shuttles electrons from NADH, via FMN and iron-sulfur (Fe-S) centers, to quinones in the respiratory chain. The immediate electron acceptor for the enzyme in this species is believed to be a menaquinone. Couples the redox reaction to proton translocation (for every two electrons transferred, four hydrogen ions are translocated across the cytoplasmic membrane), and thus conserves the redox energy in a proton gradient. The protein is NADH-quinone oxidoreductase subunit A of Moorella thermoacetica (strain ATCC 39073 / JCM 9320).